Here is a 479-residue protein sequence, read N- to C-terminus: Ribosomal RNA small subunit methyltransferase F (479 aa).

Residues 125–131 (AAAPGSK), Glu149, Asp176, and Asp194 each bind S-adenosyl-L-methionine. The active-site Nucleophile is Cys247.

Belongs to the class I-like SAM-binding methyltransferase superfamily. RsmB/NOP family.

The protein resides in the cytoplasm. It catalyses the reaction cytidine(1407) in 16S rRNA + S-adenosyl-L-methionine = 5-methylcytidine(1407) in 16S rRNA + S-adenosyl-L-homocysteine + H(+). Functionally, specifically methylates the cytosine at position 1407 (m5C1407) of 16S rRNA. The chain is Ribosomal RNA small subunit methyltransferase F from Escherichia coli (strain UTI89 / UPEC).